The following is a 241-amino-acid chain: 1-(5-phosphoribosyl)-5-[(5-phosphoribosylamino)methylideneamino] imidazole-4-carboxamide isomerase (241 aa).

The active-site Proton acceptor is D10. Catalysis depends on D131, which acts as the Proton donor.

This sequence belongs to the HisA/HisF family.

The protein resides in the cytoplasm. The enzyme catalyses 1-(5-phospho-beta-D-ribosyl)-5-[(5-phospho-beta-D-ribosylamino)methylideneamino]imidazole-4-carboxamide = 5-[(5-phospho-1-deoxy-D-ribulos-1-ylimino)methylamino]-1-(5-phospho-beta-D-ribosyl)imidazole-4-carboxamide. The protein operates within amino-acid biosynthesis; L-histidine biosynthesis; L-histidine from 5-phospho-alpha-D-ribose 1-diphosphate: step 4/9. The sequence is that of 1-(5-phosphoribosyl)-5-[(5-phosphoribosylamino)methylideneamino] imidazole-4-carboxamide isomerase from Bifidobacterium longum (strain NCC 2705).